The chain runs to 330 residues: Pseudouridine-5'-phosphate glycosidase (330 aa).

The Proton donor role is filled by E50. Substrate-binding residues include K112 and V132. D164 lines the Mn(2+) pocket. 166–168 (SSD) lines the substrate pocket. K185 serves as the catalytic Nucleophile.

Belongs to the pseudouridine-5'-phosphate glycosidase family. As to quaternary structure, homotrimer. Mn(2+) serves as cofactor.

The protein resides in the peroxisome. The catalysed reaction is D-ribose 5-phosphate + uracil = psi-UMP + H2O. Catalyzes the reversible cleavage of pseudouridine 5'-phosphate (PsiMP) to ribose 5-phosphate and uracil. Functions biologically in the cleavage direction, as part of a pseudouridine degradation pathway. Acts together with the pseudouridine kinase PUKI in the peroxisome to prevent toxic pseudouridine monophosphate accumulation. Can catalyze the formation of pseudouridine 5'-phosphate (reverse reaction) in vitro, with a catalytic efficiency 4 times lower than the hydrolysis reaction. The polypeptide is Pseudouridine-5'-phosphate glycosidase (Arabidopsis thaliana (Mouse-ear cress)).